We begin with the raw amino-acid sequence, 118 residues long: Small ribosomal subunit protein uS13 (118 aa).

The segment at His91 to Ala118 is disordered.

This sequence belongs to the universal ribosomal protein uS13 family. In terms of assembly, part of the 30S ribosomal subunit. Forms a loose heterodimer with protein S19. Forms two bridges to the 50S subunit in the 70S ribosome.

Functionally, located at the top of the head of the 30S subunit, it contacts several helices of the 16S rRNA. In the 70S ribosome it contacts the 23S rRNA (bridge B1a) and protein L5 of the 50S subunit (bridge B1b), connecting the 2 subunits; these bridges are implicated in subunit movement. Contacts the tRNAs in the A and P-sites. The polypeptide is Small ribosomal subunit protein uS13 (Francisella tularensis subsp. tularensis (strain FSC 198)).